Consider the following 115-residue polypeptide: Holo-[acyl-carrier-protein] synthase (115 aa).

Residues Asp-8 and Glu-50 each coordinate Mg(2+).

Belongs to the P-Pant transferase superfamily. AcpS family. The cofactor is Mg(2+).

It localises to the cytoplasm. The catalysed reaction is apo-[ACP] + CoA = holo-[ACP] + adenosine 3',5'-bisphosphate + H(+). Functionally, transfers the 4'-phosphopantetheine moiety from coenzyme A to a Ser of acyl-carrier-protein. This is Holo-[acyl-carrier-protein] synthase from Pseudarthrobacter chlorophenolicus (strain ATCC 700700 / DSM 12829 / CIP 107037 / JCM 12360 / KCTC 9906 / NCIMB 13794 / A6) (Arthrobacter chlorophenolicus).